Reading from the N-terminus, the 934-residue chain is Serine/threonine-protein kinase PknD (934 aa).

Positions 4–296 constitute a Protein kinase domain; that stretch reads YELIRLIGKG…ELRQALQPYL (293 aa). Residues 10–18 and Lys-33 each bind ATP; that span reads IGKGGMGEV. Asp-138 acts as the Proton acceptor in catalysis.

The protein belongs to the protein kinase superfamily. Ser/Thr protein kinase family. Post-translationally, autophosphorylated on serine and threonine residues.

It catalyses the reaction L-seryl-[protein] + ATP = O-phospho-L-seryl-[protein] + ADP + H(+). The enzyme catalyses L-threonyl-[protein] + ATP = O-phospho-L-threonyl-[protein] + ADP + H(+). Its function is as follows. Together with the serine/threonine kinase Pkn1, may play a role in the specific interactions with host proteins during intracellular growth. The sequence is that of Serine/threonine-protein kinase PknD from Chlamydia trachomatis serovar A (strain ATCC VR-571B / DSM 19440 / HAR-13).